We begin with the raw amino-acid sequence, 337 residues long: Geranylgeranyl pyrophosphate synthase subD (337 aa).

Isopentenyl diphosphate contacts are provided by K53, R56, and H85. Mg(2+)-binding residues include D92 and D96. R101 contributes to the dimethylallyl diphosphate binding site. Residue R102 coordinates isopentenyl diphosphate. 3 residues coordinate dimethylallyl diphosphate: K179, T180, and Q219. D222 is a binding site for Mg(2+). Residues N226, K236, and K246 each coordinate dimethylallyl diphosphate.

It belongs to the FPP/GGPP synthase family. Mg(2+) is required as a cofactor.

It carries out the reaction isopentenyl diphosphate + dimethylallyl diphosphate = (2E)-geranyl diphosphate + diphosphate. The catalysed reaction is isopentenyl diphosphate + (2E)-geranyl diphosphate = (2E,6E)-farnesyl diphosphate + diphosphate. It catalyses the reaction isopentenyl diphosphate + (2E,6E)-farnesyl diphosphate = (2E,6E,10E)-geranylgeranyl diphosphate + diphosphate. It participates in secondary metabolite biosynthesis; terpenoid biosynthesis. Functionally, geranylgeranyl pyrophosphate synthase; part of the gene cluster that mediates the biosynthesis of the immunosuppressants subglutinols, meroterpenoids consisting of an alpha-pyrone (4-hydroxy-5,6-dimethyl-2-pyrone) moiety attached to a decalin core fused to a five-membered cyclic ether carrying a prenylside chain. The first step of the pathway is the synthesis of the alpha-pyrone moiety by the polyketide synthase subA via condensation of one acetyl-CoA starter unit with 3 malonyl-CoA units and 2 methylations. The alpha-pyrone is then combined with geranylgeranyl pyrophosphate (GGPP) formed by the GGPP synthase subD through the action of the prenyltransferase subC to yield a linear alpha-pyrone diterpenoid. Subsequent steps in the subglutinol biosynthetic pathway involve the decalin core formation, which is thought to be initiated by the epoxidation of the C10-C11 olefin by the FAD-dependent oxidoreductase subE. The following cyclization cascade would be catalyzed by the terpene cyclase subB. Lastly, the FAD-dependent dehydrogenase subF probably catalyzes the five-membered cyclic ether formation to complete the formation of subglutinol A. Subsequent redox reactions appear to give rise to subglutinol C and D, however, it remains unclear which enzymes are responsible for these transformations. SubD may have secondary function in the conversion of the identified subglutinols to subglutinol analog 45, which seems to be the major product of the cluster. The chain is Geranylgeranyl pyrophosphate synthase subD from Metarhizium robertsii (strain ARSEF 23 / ATCC MYA-3075) (Metarhizium anisopliae (strain ARSEF 23)).